We begin with the raw amino-acid sequence, 314 residues long: Ribosomal RNA large subunit methyltransferase F (314 aa).

This sequence belongs to the methyltransferase superfamily. METTL16/RlmF family.

It is found in the cytoplasm. The enzyme catalyses adenosine(1618) in 23S rRNA + S-adenosyl-L-methionine = N(6)-methyladenosine(1618) in 23S rRNA + S-adenosyl-L-homocysteine + H(+). Its function is as follows. Specifically methylates the adenine in position 1618 of 23S rRNA. The chain is Ribosomal RNA large subunit methyltransferase F from Flavobacterium psychrophilum (strain ATCC 49511 / DSM 21280 / CIP 103535 / JIP02/86).